We begin with the raw amino-acid sequence, 646 residues long: Cytochrome b translation regulator cbp8 (646 aa).

In terms of assembly, component of a complex, at least composed of cbp7 and cbp8.

The protein localises to the mitochondrion. Translation factor for cob1/cytochrome b; plays a role in cob1 mRNA stabilization and required for correct folding of the protein. In Schizosaccharomyces pombe (strain 972 / ATCC 24843) (Fission yeast), this protein is Cytochrome b translation regulator cbp8.